The chain runs to 123 residues: UPF0102 protein PSEEN4497 (123 aa).

This sequence belongs to the UPF0102 family.

The polypeptide is UPF0102 protein PSEEN4497 (Pseudomonas entomophila (strain L48)).